Consider the following 153-residue polypeptide: uncharacterized protein (153 aa).

The signal sequence occupies residues 1-19 (MKACLLLFFYFSFICQLHG).

This is an uncharacterized protein from Escherichia coli (strain K12).